The primary structure comprises 47 residues: Protein YqhI (47 aa).

In Escherichia coli (strain K12), this protein is Protein YqhI.